A 215-amino-acid polypeptide reads, in one-letter code: uncharacterized protein (215 aa).

Residues 1–29 form the signal peptide; it reads MDKVQSGFLILFLFLMECQLHLCLPYADG. Residues 30–100 lie on the Extracellular side of the membrane; it reads LHPTGNITGL…IIRHRPALVK (71 aa). The chain crosses the membrane as a helical span at residues 101-121; sequence VILISSVAFSIALICGMAISY. Residues 122-215 are Cytoplasmic-facing; it reads MIYRLAQAEE…ASHNGKMEDL (94 aa). The segment at 191–215 is disordered; that stretch reads LKEEQNSVTENKTKNASHNGKMEDL. A compositionally biased stretch (polar residues) spans 196–208; it reads NSVTENKTKNASH.

Its subcellular location is the membrane. This is an uncharacterized protein from Homo sapiens (Human).